A 196-amino-acid chain; its full sequence is Flagellar transcriptional regulator FlhC (196 aa).

Positions 138, 141, 158, and 161 each coordinate Zn(2+).

This sequence belongs to the FlhC family. Heterohexamer composed of two FlhC and four FlhD subunits. Each FlhC binds a FlhD dimer, forming a heterotrimer, and a hexamer assembles by dimerization of two heterotrimers. Requires Zn(2+) as cofactor.

The protein localises to the cytoplasm. Its function is as follows. Functions in complex with FlhD as a master transcriptional regulator that regulates transcription of several flagellar and non-flagellar operons by binding to their promoter region. Activates expression of class 2 flagellar genes, including fliA, which is a flagellum-specific sigma factor that turns on the class 3 genes. Also regulates genes whose products function in a variety of physiological pathways. This is Flagellar transcriptional regulator FlhC from Sodalis glossinidius (strain morsitans).